Here is a 463-residue protein sequence, read N- to C-terminus: Fumarate hydratase class II (463 aa).

Substrate contacts are provided by residues 97–99 (SGT), 128–131 (HPND), 138–140 (SSN), and T186. The active-site Proton donor/acceptor is H187. S317 is an active-site residue. Substrate is bound by residues S318 and 323-325 (KVN).

Belongs to the class-II fumarase/aspartase family. Fumarase subfamily. As to quaternary structure, homotetramer.

The protein resides in the cytoplasm. The catalysed reaction is (S)-malate = fumarate + H2O. Its pathway is carbohydrate metabolism; tricarboxylic acid cycle; (S)-malate from fumarate: step 1/1. In terms of biological role, involved in the TCA cycle. Catalyzes the stereospecific interconversion of fumarate to L-malate. The polypeptide is Fumarate hydratase class II (Helicobacter pylori (strain ATCC 700392 / 26695) (Campylobacter pylori)).